A 311-amino-acid polypeptide reads, in one-letter code: Delta-1-pyrroline-5-carboxylate reductase kk1I (311 aa).

Residues 1 to 31 (MTKRESNTLAVLGCGMVFLVSLLDLANRLLG) form the signal peptide. N59 is a glycosylation site (N-linked (GlcNAc...) asparagine).

The protein belongs to the pyrroline-5-carboxylate reductase family.

Its pathway is secondary metabolite biosynthesis. Delta-1-pyrroline-5-carboxylate reductase; part of the gene cluster that mediates the biosynthesis of KK-1, a novel cyclic depsipeptide with 10 residues which is a promising active compound with high activity against many plant pathogens, especially Botrytis cinerea. Within the pathway, kk1I catalyzes the synthesis of the L-pipecolic acid residue of KK-1 from delta-1-pyrroline-5-carboxylate (P5C), a metabolic intermediate of lysine. The nonribosomal peptide synthetase (NRPS) kk1B catalyzes the elongation and cyclization of the decapeptide chain composed of 1 D-lactic acid residue (D-Lac), 1 pipecolic acid residue (Pip), 1 aspartic acid residue (Asp), 1 isoleucine residue (Ile), 1 glycine residue (Gly), 1 tyrosine residue (Tyr) and 4 valine residues (Val). The Asp, Ile and 3 Val residues are N-methylated by the 5 methyltransferase domains from the NRPS (found in modules 3, 5, 6, 7 and 9), whereas the Tyr residue is O-methylated by the cluster encoded O-methyltransferase kk1A. The thioesterase kk1J is likely to be involved in the corrective mechanism of peptide chain synthesis. The D-lactate dehydrogenase kk1H is involved in the synthesis of D-lactic acid from pyruvic acid, which is recognized by the A domain of the first kk1B module. The pyrroline-5-carboxylate reductase kk1I is involved in the synthesis of the L-pipecolic acid residue of KK-1 from delta-1-pyrroline-5-carboxylate (P5C), a metabolic intermediate of lysine. It still is unclear how kk1C and kk1D are involved in the production of KK-1. The protein is Delta-1-pyrroline-5-carboxylate reductase kk1I of Curvularia clavata.